We begin with the raw amino-acid sequence, 466 residues long: MKTNQSWGGRFAEGPKEAVAQYTDSQSYDRALYAQDIRASQAHARMLGRQGVITPEEAQLLVEGLDRVREEIRSDSFIWKPELEDVHMNIEARLTEIMGNVGKKLHTGRSRNDQVGLSFRLFVADRLETWRQRAAALCAILVQRATEHAGDILPGCTHLQPAQPVSLAHHLLAYAWMFRRDAMRLGDCLDRVRISPLGAAALAGTTYPLDPQSVAKDVGFDGIYGNSMDAVSDRDFVLEALFGGSTIMMHLSRLCEEIILWANPAFGFVRLPDSYSTGSSIMPQKKNPDVAELMRGKTGRVYGSLMGMLTIMKGLPLAYNRDMQEDKEGFLDADRTVEASLRLMAGMMEEIAFRTDRMREACKAGFLNATELADYLVGKGLPFREAHHVTGQCVAAAEKQAKGLEDLTLPEMQALEPRIGEDVYAILDYAAAVQRRETPGGTGPQSVAAQVAQLRTWLAGMDGMVQ.

It belongs to the lyase 1 family. Argininosuccinate lyase subfamily.

The protein resides in the cytoplasm. The enzyme catalyses 2-(N(omega)-L-arginino)succinate = fumarate + L-arginine. The protein operates within amino-acid biosynthesis; L-arginine biosynthesis; L-arginine from L-ornithine and carbamoyl phosphate: step 3/3. This Desulfovibrio desulfuricans (strain ATCC 27774 / DSM 6949 / MB) protein is Argininosuccinate lyase.